The following is a 129-amino-acid chain: Trefoil factor 2 (129 aa).

Residues 1–23 (MGPRGAPLLVVVLVLGLHALAEG) form the signal peptide. P-type domains are found at residues 29–73 (CRCS…FHPL) and 79–122 (EQCV…FFPQ). Cystine bridges form between C29–C127, C31–C58, C42–C57, C52–C69, C81–C107, C91–C106, and C101–C118.

As to expression, expressed in the digestive tract, where it was found predominantly in the stomach with highest expression in the antrum. It is secreted predominantly from antral mucous cells into the lumen of the gastrointestinal tract.

The protein resides in the secreted. Functionally, inhibits gastrointestinal motility and gastric acid secretion. Could function as a structural component of gastric mucus, possibly by stabilizing glycoproteins in the mucus gel through interactions with carbohydrate side chains. This chain is Trefoil factor 2 (Tff2), found in Rattus norvegicus (Rat).